The chain runs to 519 residues: Probable U3 small nucleolar RNA-associated protein 18 (519 aa).

WD repeat units follow at residues 26-66 (DKEN…MFDT), 71-111 (GAKD…RLMI), 216-254 (SHSG…NPLV), 259-298 (LRSS…VQKV), 306-345 (NFQP…FATS), 347-386 (KIEG…VVRR), 390-429 (QDGV…ADAA), 438-479 (NITF…VFRN), and 485-519 (TPLG…AHYD).

It belongs to the WD repeat UTP18 family. In terms of assembly, component of the ribosomal small subunit (SSU) processome.

The protein resides in the nucleus. The protein localises to the nucleolus. Its function is as follows. Involved in nucleolar processing of pre-18S ribosomal RNA. This chain is Probable U3 small nucleolar RNA-associated protein 18, found in Schizosaccharomyces pombe (strain 972 / ATCC 24843) (Fission yeast).